The sequence spans 205 residues: Max-like protein homolog 2 (205 aa).

Composition is skewed to low complexity over residues Met-1 to Ser-12 and Ser-26 to Ser-40. The disordered stretch occupies residues Met-1 to Gln-58. Positions Ser-45–Gln-58 are enriched in basic and acidic residues. The tract at residues Arg-47 to Arg-60 is basic motif. The region spanning Arg-47–Leu-101 is the bHLH domain. Residues Glu-61–Leu-101 are helix-loop-helix motif. A coiled-coil region spans residues Met-98–Met-132.

Widely expressed.

It is found in the nucleus. The protein localises to the cytoplasm. It localises to the mitochondrion. Transcription factor. Binds to the E box motif 5'-CACGTG-3', probably in a heterodimeric complex with mml-1. Involved in modulating longevity in response to TOR signaling, dietary restriction, the decline in protein homeostasis associated with normal aging, germline signaling and the insulin-like signaling pathway. Plays a role in autophagy. Involved in regulating migration of the ray 1 precursor cells in the male tail, acting in concert with Wnt and semaphorin signaling pathways. Regulates transcription of genes encoding extracellular matrix (ECM) components which may contribute to the substratum required for migration of the neighboring ray 1 precursor cells. Required for resistance to oxidative stress. Involved in promoting infection by the microsporidian pathogen N.parisii, probably acting independently of its canonical partner, mml-1. The chain is Max-like protein homolog 2 from Caenorhabditis elegans.